The primary structure comprises 163 residues: Small ribosomal subunit protein uS5 (163 aa).

The 64-residue stretch at 11-74 (LTDRVVHINR…EQAKKNLIRV (64 aa)) folds into the S5 DRBM domain.

Belongs to the universal ribosomal protein uS5 family. As to quaternary structure, part of the 30S ribosomal subunit. Contacts proteins S4 and S8.

With S4 and S12 plays an important role in translational accuracy. Its function is as follows. Located at the back of the 30S subunit body where it stabilizes the conformation of the head with respect to the body. This is Small ribosomal subunit protein uS5 from Syntrophotalea carbinolica (strain DSM 2380 / NBRC 103641 / GraBd1) (Pelobacter carbinolicus).